We begin with the raw amino-acid sequence, 400 residues long: MTTLGTPLSPSATRVLLLGSGELGKEVAIELQRFGVEVIAADRYANAPAMQVAHRSHVLDMLDPAALRVLIASERPHVIVPEIEAIHTETLVALEREQGQKVIPAARAARLTMDREGIRRLAAETLGLPTSPYRFVDTAADYREAIAAVGLPCVVKPVMSSSGKGQSTLRSEADIDAAWEYAQTGGRAGAGRCIVEGFIDFDYEITLLTVRHAGGTSYCDPIGHWQQDGDYRESWQPQPMSAAALRRSQEIAKAITDDLGGWGLFGVELFVKGDEVWFSEVSPRPHDTGLVTLVSQELSEFALHARAILGLPVGAEDGGVIGQSGPSASCALLAHGNGVPVFDNVADALRDPNTALRLFGKPRVDGHRRVGVTLARADSIDAAREKARVAAAALGIQLTA.

N(1)-(5-phospho-beta-D-ribosyl)glycinamide-binding positions include E22–L23 and E82. ATP-binding positions include R115, K156, S161–Q166, E196–I199, and E204. The ATP-grasp domain occupies R120 to L309. Mg(2+) contacts are provided by E268 and E280. N(1)-(5-phospho-beta-D-ribosyl)glycinamide is bound by residues D287, K361, and R368 to R369.

This sequence belongs to the PurK/PurT family. In terms of assembly, homodimer.

It catalyses the reaction N(1)-(5-phospho-beta-D-ribosyl)glycinamide + formate + ATP = N(2)-formyl-N(1)-(5-phospho-beta-D-ribosyl)glycinamide + ADP + phosphate + H(+). Its pathway is purine metabolism; IMP biosynthesis via de novo pathway; N(2)-formyl-N(1)-(5-phospho-D-ribosyl)glycinamide from N(1)-(5-phospho-D-ribosyl)glycinamide (formate route): step 1/1. In terms of biological role, involved in the de novo purine biosynthesis. Catalyzes the transfer of formate to 5-phospho-ribosyl-glycinamide (GAR), producing 5-phospho-ribosyl-N-formylglycinamide (FGAR). Formate is provided by PurU via hydrolysis of 10-formyl-tetrahydrofolate. The sequence is that of Formate-dependent phosphoribosylglycinamide formyltransferase from Xanthomonas oryzae pv. oryzae (strain KACC10331 / KXO85).